A 3118-amino-acid chain; its full sequence is Laminin subunit alpha-2 (3118 aa).

The signal sequence occupies residues 1–19 (MPAATAGILLLLLLGTLEG). The Laminin N-terminal domain maps to 31–282 (QQRGLFPAVL…SVKDISVGGM (252 aa)). 2 N-linked (GlcNAc...) asparagine glycosylation sites follow: Asn-51 and Asn-85. 6 disulfide bridges follow: Cys-283-Cys-292, Cys-285-Cys-303, Cys-305-Cys-314, Cys-317-Cys-337, Cys-340-Cys-349, and Cys-342-Cys-374. Laminin EGF-like domains lie at 283–339 (CICY…ECEA), 340–409 (CNCH…PCQP), 410–464 (CHCD…DCQP), and 465–513 (CNCS…GCEE). Residue Asn-299 is glycosylated (N-linked (GlcNAc...) asparagine). N-linked (GlcNAc...) asparagine glycosylation is found at Asn-359 and Asn-376. Disulfide bonds link Cys-377-Cys-386, Cys-389-Cys-407, Cys-410-Cys-422, Cys-412-Cys-438, Cys-440-Cys-449, Cys-452-Cys-462, Cys-465-Cys-478, Cys-467-Cys-482, Cys-484-Cys-493, and Cys-496-Cys-511. Asn-466 carries an N-linked (GlcNAc...) asparagine glycan. The Laminin EGF-like 5; first part domain occupies 514 to 523 (CFCSGVSNRC). A Laminin IV type A 1 domain is found at 527 to 719 (YWTYGNIQDM…DRRIATDVEV (193 aa)). The 33-residue stretch at 720–752 (CQCPPGYSGSSCETCWPRHRRVNGTIFGGICEP) folds into the Laminin EGF-like 5; second part domain. Asn-742 carries an N-linked (GlcNAc...) asparagine glycan. Cystine bridges form between Cys-753–Cys-762, Cys-755–Cys-769, Cys-772–Cys-781, Cys-784–Cys-800, Cys-803–Cys-818, Cys-805–Cys-828, Cys-831–Cys-840, Cys-843–Cys-858, Cys-861–Cys-875, Cys-863–Cys-882, Cys-885–Cys-894, Cys-897–Cys-911, Cys-914–Cys-926, Cys-916–Cys-933, Cys-935–Cys-944, Cys-947–Cys-960, Cys-963–Cys-975, Cys-965–Cys-981, Cys-983–Cys-992, Cys-995–Cys-1007, Cys-1010–Cys-1019, Cys-1012–Cys-1026, Cys-1028–Cys-1037, Cys-1040–Cys-1053, Cys-1056–Cys-1068, Cys-1058–Cys-1075, Cys-1077–Cys-1086, Cys-1089–Cys-1099, Cys-1102–Cys-1114, Cys-1104–Cys-1130, Cys-1132–Cys-1141, and Cys-1144–Cys-1159. Laminin EGF-like domains are found at residues 753-802 (CQCF…DCQP), 803-860 (CACP…SCQP), 861-913 (CQCN…NCQP), 914-962 (CRCN…GCLP), 963-1009 (CNCN…GCIA), 1010-1055 (CDCS…GCKV), 1056-1101 (CNCS…LCTL), and 1102-1161 (CDCF…GCSS). N-linked (GlcNAc...) asparagine glycosylation is present at Asn-919. Residue Asn-1031 is glycosylated (N-linked (GlcNAc...) asparagine). Asn-1057 carries an N-linked (GlcNAc...) asparagine glycan. The Laminin EGF-like 14; first part domain occupies 1162-1171 (CYCFGVTSQC). Positions 1172-1375 (SEAKGLIRTW…GSPPAHLIER (204 aa)) constitute a Laminin IV type A 2 domain. The Laminin EGF-like 14; second part domain occupies 1376 to 1415 (CDCPPGYSGLSCETCAPGFYRLRSEPGGRTPGPTLGTCVP). 13 disulfides stabilise this stretch: Cys-1378/Cys-1387, Cys-1416/Cys-1425, Cys-1418/Cys-1432, Cys-1435/Cys-1444, Cys-1447/Cys-1462, Cys-1465/Cys-1480, Cys-1467/Cys-1490, Cys-1493/Cys-1502, Cys-1505/Cys-1520, Cys-1523/Cys-1535, Cys-1525/Cys-1542, Cys-1544/Cys-1553, and Cys-1556/Cys-1567. Laminin EGF-like domains follow at residues 1416–1464 (CQCN…DCQP), 1465–1522 (CACP…SCQE), and 1523–1569 (CECD…ECVF). The segment at 1570-2140 (CGDECTGLLL…NQARKQANSI (571 aa)) is domain II and I. Residues Asn-1593, Asn-1610, Asn-1696, Asn-1806, Asn-1897, Asn-1912, Asn-1916, Asn-2013, Asn-2024, Asn-2041, Asn-2122, and Asn-2236 are each glycosylated (N-linked (GlcNAc...) asparagine). The stretch at 1662–1863 (QDAERTNSRA…DIKTKLPPMS (202 aa)) forms a coiled coil. Residues 1923–2146 (AYSNIKDYID…ANSIKVSVSS (224 aa)) adopt a coiled-coil conformation. 5 consecutive Laminin G-like domains span residues 2141–2324 (KVSV…CKGC), 2336–2517 (TIQF…TKGC), 2522–2706 (VYTV…IGRC), 2759–2930 (SKQF…VGTC), and 2929–3115 (TCFA…PVSC). A disulfide bridge links Cys-2298 with Cys-2324. N-linked (GlcNAc...) asparagine glycans are attached at residues Asn-2356, Asn-2431, and Asn-2474. A disulfide bridge connects residues Cys-2491 and Cys-2517. Residues Asn-2547, Asn-2554, and Asn-2644 are each glycosylated (N-linked (GlcNAc...) asparagine). A disulfide bridge connects residues Cys-2679 and Cys-2706. N-linked (GlcNAc...) asparagine glycosylation occurs at Asn-2889. 2 disulfides stabilise this stretch: Cys-2905/Cys-2930 and Cys-3083/Cys-3115.

In terms of assembly, laminin is a complex glycoprotein, consisting of three different polypeptide chains (alpha, beta, gamma), which are bound to each other by disulfide bonds into a cross-shaped molecule comprising one long and three short arms with globules at each end. Alpha-2 is a subunit of laminin-2 (laminin-211 or merosin), laminin-4 (laminin-221 or S-merosin) and laminin-12 (laminin-213). Interacts with FBLN1, FBLN2 and NID2.

The protein resides in the secreted. It is found in the extracellular space. Its subcellular location is the extracellular matrix. It localises to the basement membrane. Its function is as follows. Binding to cells via a high affinity receptor, laminin is thought to mediate the attachment, migration and organization of cells into tissues during embryonic development by interacting with other extracellular matrix components. The polypeptide is Laminin subunit alpha-2 (Lama2) (Mus musculus (Mouse)).